The following is a 355-amino-acid chain: Protein RecA (355 aa).

67 to 74 (GPESSGKT) lines the ATP pocket.

Belongs to the RecA family.

It is found in the cytoplasm. Can catalyze the hydrolysis of ATP in the presence of single-stranded DNA, the ATP-dependent uptake of single-stranded DNA by duplex DNA, and the ATP-dependent hybridization of homologous single-stranded DNAs. It interacts with LexA causing its activation and leading to its autocatalytic cleavage. The protein is Protein RecA of Histophilus somni (strain 129Pt) (Haemophilus somnus).